A 111-amino-acid chain; its full sequence is Universal stress protein B (111 aa).

2 helical membrane-spanning segments follow: residues 1-21 (MIST…NMAR) and 90-110 (FLLT…LMIW).

This sequence belongs to the universal stress protein B family.

The protein localises to the cell inner membrane. The chain is Universal stress protein B from Salmonella arizonae (strain ATCC BAA-731 / CDC346-86 / RSK2980).